The following is a 112-amino-acid chain: T cell receptor alpha variable 41 (112 aa).

Positions Met-1–Ala-21 are cleaved as a signal peptide. The Ig-like domain occupies Asn-24 to Arg-112. Residues Asn-32 and Asn-44 are each glycosylated (N-linked (GlcNAc...) asparagine). A disulfide bridge links Cys-45 with Cys-109.

In terms of assembly, alpha-beta TR is a heterodimer composed of an alpha and beta chain; disulfide-linked. The alpha-beta TR is associated with the transmembrane signaling CD3 coreceptor proteins to form the TR-CD3 (TcR or TCR). The assembly of alpha-beta TR heterodimers with CD3 occurs in the endoplasmic reticulum where a single alpha-beta TR heterodimer associates with one CD3D-CD3E heterodimer, one CD3G-CD3E heterodimer and one CD247 homodimer forming a stable octameric structure. CD3D-CD3E and CD3G-CD3E heterodimers preferentially associate with TR alpha and TR beta chains, respectively. The association of the CD247 homodimer is the last step of TcR assembly in the endoplasmic reticulum and is required for transport to the cell surface.

It localises to the cell membrane. In terms of biological role, v region of the variable domain of T cell receptor (TR) alpha chain that participates in the antigen recognition. Alpha-beta T cell receptors are antigen specific receptors which are essential to the immune response and are present on the cell surface of T lymphocytes. Recognize peptide-major histocompatibility (MH) (pMH) complexes that are displayed by antigen presenting cells (APC), a prerequisite for efficient T cell adaptive immunity against pathogens. Binding of alpha-beta TR to pMH complex initiates TR-CD3 clustering on the cell surface and intracellular activation of LCK that phosphorylates the ITAM motifs of CD3G, CD3D, CD3E and CD247 enabling the recruitment of ZAP70. In turn ZAP70 phosphorylates LAT, which recruits numerous signaling molecules to form the LAT signalosome. The LAT signalosome propagates signal branching to three major signaling pathways, the calcium, the mitogen-activated protein kinase (MAPK) kinase and the nuclear factor NF-kappa-B (NF-kB) pathways, leading to the mobilization of transcription factors that are critical for gene expression and essential for T cell growth and differentiation. The T cell repertoire is generated in the thymus, by V-(D)-J rearrangement. This repertoire is then shaped by intrathymic selection events to generate a peripheral T cell pool of self-MH restricted, non-autoaggressive T cells. Post-thymic interaction of alpha-beta TR with the pMH complexes shapes TR structural and functional avidity. The protein is T cell receptor alpha variable 41 of Homo sapiens (Human).